Consider the following 338-residue polypeptide: Phosphatidate cytidylyltransferase, mitochondrial (338 aa).

The protein belongs to the TAM41 family. Requires Mg(2+) as cofactor.

It localises to the mitochondrion inner membrane. It carries out the reaction a 1,2-diacyl-sn-glycero-3-phosphate + CTP + H(+) = a CDP-1,2-diacyl-sn-glycerol + diphosphate. The protein operates within phospholipid metabolism; CDP-diacylglycerol biosynthesis; CDP-diacylglycerol from sn-glycerol 3-phosphate: step 3/3. Functionally, catalyzes the conversion of phosphatidic acid (PA) to CDP-diacylglycerol (CDP-DAG), an essential intermediate in the synthesis of phosphatidylglycerol, cardiolipin and phosphatidylinositol. The chain is Phosphatidate cytidylyltransferase, mitochondrial (tamm41) from Danio rerio (Zebrafish).